We begin with the raw amino-acid sequence, 494 residues long: Alpha-amylase-related protein (494 aa).

The N-terminal stretch at 1 to 20 (MFKFASAVILCLVAASSTQA) is a signal peptide. Position 21 is a pyrrolidone carboxylic acid (glutamine 21). A disulfide bridge connects residues cysteine 48 and cysteine 104. Asparagine 118, glutamine 169, and aspartate 178 together coordinate Ca(2+). Cysteine 157 and cysteine 171 form a disulfide bridge. A chloride-binding site is contributed by arginine 206. Aspartate 208 serves as the catalytic Nucleophile. Histidine 212 contributes to the Ca(2+) binding site. Residue glutamate 245 is the Proton donor of the active site. 2 residues coordinate chloride: asparagine 308 and arginine 343. Cystine bridges form between cysteine 376–cysteine 382, cysteine 418–cysteine 441, and cysteine 448–cysteine 460.

This sequence belongs to the glycosyl hydrolase 13 family. Monomer. It depends on Ca(2+) as a cofactor. Chloride is required as a cofactor.

Its subcellular location is the secreted. It carries out the reaction Endohydrolysis of (1-&gt;4)-alpha-D-glucosidic linkages in polysaccharides containing three or more (1-&gt;4)-alpha-linked D-glucose units.. This Drosophila ercepeae (Fruit fly) protein is Alpha-amylase-related protein (Amyrel).